The chain runs to 161 residues: Cytochrome c-type biogenesis protein CcmE (161 aa).

Residues 1–8 (MNARRKKR) are Cytoplasmic-facing. Residues 9–29 (LTLAVALIGGVAAIASLLLYA) form a helical; Signal-anchor for type II membrane protein membrane-spanning segment. Residues 30-161 (LNSNLNLFYT…DYNEQQKTSY (132 aa)) lie on the Periplasmic side of the membrane. Heme is bound by residues His131 and Tyr135.

Belongs to the CcmE/CycJ family.

It localises to the cell inner membrane. In terms of biological role, heme chaperone required for the biogenesis of c-type cytochromes. Transiently binds heme delivered by CcmC and transfers the heme to apo-cytochromes in a process facilitated by CcmF and CcmH. This is Cytochrome c-type biogenesis protein CcmE from Shewanella sediminis (strain HAW-EB3).